We begin with the raw amino-acid sequence, 185 residues long: MPCNRAVFGAFVLALLISLQSVYFKLYEFYKNNETARNTSVAGFLKRHEVAVNVIVEFSFDILFFLCGLLGFELSPTARRLIFRRTASAEKADTVELEHVSSRRRNDSRDDSTVRNVSKTSPLASQRSRDHFDGDPREPAPPAYSPADFYPPPASPHICETPLSTRVAPSAPSASLFTAGGIGLP.

Positions methionine 1–phenylalanine 24 are cleaved as a signal peptide. The chain crosses the membrane as a helical span at residues valine 50–leucine 70. Residues glutamate 96–threonine 113 are compositionally biased toward basic and acidic residues. The segment at glutamate 96–proline 185 is disordered. A compositionally biased stretch (polar residues) spans valine 114–glutamine 126. A compositionally biased stretch (basic and acidic residues) spans arginine 127–glutamate 138. The span at proline 139–serine 155 shows a compositional bias: pro residues.

It localises to the host membrane. This is an uncharacterized protein from Colorado tick fever virus (strain USA/Florio N-7180) (CTFV).